The following is a 190-amino-acid chain: Lipid A acyltransferase PagP (190 aa).

An N-terminal signal peptide occupies residues 1–29 (MYVAMIIRKYFLIIALLVMPWLAIPSVSA). Active-site residues include His-62, Asp-105, and Ser-106.

It belongs to the lipid A palmitoyltransferase family. As to quaternary structure, homodimer.

It localises to the cell outer membrane. The enzyme catalyses a lipid A + a 1,2-diacyl-sn-glycero-3-phosphocholine = a hepta-acyl lipid A + a 2-acyl-sn-glycero-3-phosphocholine. The catalysed reaction is a lipid IVA + a 1,2-diacyl-sn-glycero-3-phosphocholine = a lipid IVB + a 2-acyl-sn-glycero-3-phosphocholine. It carries out the reaction a lipid IIA + a 1,2-diacyl-sn-glycero-3-phosphocholine = a lipid IIB + a 2-acyl-sn-glycero-3-phosphocholine. In terms of biological role, transfers a fatty acid residue from the sn-1 position of a phospholipid to the N-linked hydroxyfatty acid chain on the proximal unit of lipid A or its precursors. The protein is Lipid A acyltransferase PagP of Salmonella typhi.